The chain runs to 148 residues: Large ribosomal subunit protein uL13 (148 aa).

It belongs to the universal ribosomal protein uL13 family. In terms of assembly, part of the 50S ribosomal subunit.

Functionally, this protein is one of the early assembly proteins of the 50S ribosomal subunit, although it is not seen to bind rRNA by itself. It is important during the early stages of 50S assembly. The protein is Large ribosomal subunit protein uL13 of Ureaplasma parvum serovar 3 (strain ATCC 27815 / 27 / NCTC 11736).